The primary structure comprises 411 residues: Diaminobutyrate--2-oxoglutarate transaminase (411 aa).

Position 262 is an N6-(pyridoxal phosphate)lysine (Lys-262).

It belongs to the class-III pyridoxal-phosphate-dependent aminotransferase family. Requires pyridoxal 5'-phosphate as cofactor.

It catalyses the reaction L-2,4-diaminobutanoate + 2-oxoglutarate = L-aspartate 4-semialdehyde + L-glutamate. It participates in amine and polyamine biosynthesis; ectoine biosynthesis; L-ectoine from L-aspartate 4-semialdehyde: step 1/3. In terms of biological role, catalyzes reversively the conversion of L-aspartate beta-semialdehyde (ASA) to L-2,4-diaminobutyrate (DABA) by transamination with L-glutamate. The sequence is that of Diaminobutyrate--2-oxoglutarate transaminase (ectB) from Vibrio cholerae serotype O1 (strain ATCC 39315 / El Tor Inaba N16961).